The primary structure comprises 71 residues: Natterin-P (71 aa).

The signal sequence occupies residues 1 to 18 (MKLLVLLVTLLVLSWTSA). Residues 19–45 (EDLGDQEILENNEDNNHESELGEPAAQ) constitute a propeptide that is removed on maturation. The span at 22–31 (GDQEILENNE) shows a compositional bias: acidic residues. Residues 22–54 (GDQEILENNEDNNHESELGEPAAQHTDDETSQL) form a disordered region. Cys-62 and Cys-71 form a disulfide bridge.

The protein belongs to the natterin family. As to expression, expressed by the venom gland.

The protein resides in the secreted. Inhibited by tissue-kallikrein inhibitor TKI and trasylol. Plasma kallikrein inhibitor PKSI527 and classical inhibitors of serine-, metallo-, thiol- or aspartate-peptidases evokes a minor inhibition of the peptide digestion. Functionally, shows nociceptive, edema-inducing and kininogenase activity with release of kallidin from low molecular weight kininogen. The cleavage occurs at Met-Lys bonds. In Thalassophryne nattereri (Copper Joe toadfish), this protein is Natterin-P.